The following is a 242-amino-acid chain: Probable transcriptional regulatory protein XCC3027 (242 aa).

This sequence belongs to the TACO1 family.

The protein localises to the cytoplasm. The polypeptide is Probable transcriptional regulatory protein XCC3027 (Xanthomonas campestris pv. campestris (strain ATCC 33913 / DSM 3586 / NCPPB 528 / LMG 568 / P 25)).